We begin with the raw amino-acid sequence, 200 residues long: Crossover junction endodeoxyribonuclease RuvC (200 aa).

Catalysis depends on residues aspartate 18, glutamate 78, and aspartate 151. Residues aspartate 18, glutamate 78, and aspartate 151 each coordinate Mg(2+).

Belongs to the RuvC family. In terms of assembly, homodimer which binds Holliday junction (HJ) DNA. The HJ becomes 2-fold symmetrical on binding to RuvC with unstacked arms; it has a different conformation from HJ DNA in complex with RuvA. In the full resolvosome a probable DNA-RuvA(4)-RuvB(12)-RuvC(2) complex forms which resolves the HJ. Requires Mg(2+) as cofactor.

Its subcellular location is the cytoplasm. The catalysed reaction is Endonucleolytic cleavage at a junction such as a reciprocal single-stranded crossover between two homologous DNA duplexes (Holliday junction).. Its function is as follows. The RuvA-RuvB-RuvC complex processes Holliday junction (HJ) DNA during genetic recombination and DNA repair. Endonuclease that resolves HJ intermediates. Cleaves cruciform DNA by making single-stranded nicks across the HJ at symmetrical positions within the homologous arms, yielding a 5'-phosphate and a 3'-hydroxyl group; requires a central core of homology in the junction. The consensus cleavage sequence is 5'-(A/T)TT(C/G)-3'. Cleavage occurs on the 3'-side of the TT dinucleotide at the point of strand exchange. HJ branch migration catalyzed by RuvA-RuvB allows RuvC to scan DNA until it finds its consensus sequence, where it cleaves and resolves the cruciform DNA. In Cytophaga hutchinsonii (strain ATCC 33406 / DSM 1761 / CIP 103989 / NBRC 15051 / NCIMB 9469 / D465), this protein is Crossover junction endodeoxyribonuclease RuvC.